We begin with the raw amino-acid sequence, 394 residues long: 1-acylglycerol-3-phosphate O-acyltransferase ICT1 (394 aa).

Residues 74–381 (VLIHGYAASS…AGHNLFLDNP (308 aa)) form the AB hydrolase-1 domain. An HXXXXD motif motif is present at residues 374–379 (HNLFLD).

It belongs to the peptidase S33 family. ABHD4/ABHD5 subfamily.

It catalyses the reaction a 1-acyl-sn-glycero-3-phosphate + an acyl-CoA = a 1,2-diacyl-sn-glycero-3-phosphate + CoA. Functionally, lysophosphatidic acid acyltransferase involved in membrane remodeling leading to increased organic solvent tolerance. Involved in resistance to azoles and copper. The sequence is that of 1-acylglycerol-3-phosphate O-acyltransferase ICT1 (ICT1) from Saccharomyces cerevisiae (strain ATCC 204508 / S288c) (Baker's yeast).